The sequence spans 509 residues: Kynureninase 1 (509 aa).

Pyridoxal 5'-phosphate is bound by residues L169, T170, 197 to 200 (FPSD), D283, H286, and Y308. The residue at position 309 (K309) is an N6-(pyridoxal phosphate)lysine. Pyridoxal 5'-phosphate is bound by residues W349 and N377.

It belongs to the kynureninase family. Homodimer. Pyridoxal 5'-phosphate serves as cofactor.

It localises to the cytoplasm. The catalysed reaction is L-kynurenine + H2O = anthranilate + L-alanine + H(+). The enzyme catalyses 3-hydroxy-L-kynurenine + H2O = 3-hydroxyanthranilate + L-alanine + H(+). The protein operates within amino-acid degradation; L-kynurenine degradation; L-alanine and anthranilate from L-kynurenine: step 1/1. It participates in cofactor biosynthesis; NAD(+) biosynthesis; quinolinate from L-kynurenine: step 2/3. Catalyzes the cleavage of L-kynurenine (L-Kyn) and L-3-hydroxykynurenine (L-3OHKyn) into anthranilic acid (AA) and 3-hydroxyanthranilic acid (3-OHAA), respectively. In Aspergillus fumigatus (strain CBS 144.89 / FGSC A1163 / CEA10) (Neosartorya fumigata), this protein is Kynureninase 1 (bna5-1).